Consider the following 494-residue polypeptide: Maintenance of mitochondrial morphology protein 1 (494 aa).

Over 1 to 25 the chain is Lumenal; sequence MGDDQSLRSTVAENDISANLSFTQG. The chain crosses the membrane as a helical span at residues 26–46; it reads FLLGQLSVVLLIGAFIKFFIF. Topologically, residues 47 to 494 are cytoplasmic; it reads GEAPPPPSRG…GTLPGGAAAN (448 aa). Disordered stretches follow at residues 53–99, 278–330, and 395–494; these read PSRG…VPSS, PPLH…KSNV, and RTGV…AAAN. Over residues 57 to 67 the composition is skewed to basic residues; that stretch reads LSHRASTHRRS. Polar residues-rich tracts occupy residues 68–81 and 88–99; these read NSIYTINPNEGTSR and STSNVLRPVPSS. Residues 134-387 form the SMP-LTD domain; sequence QPESLDWFNV…EPRVQVVGLP (254 aa). The segment covering 278–290 has biased composition (pro residues); that stretch reads PPLHTPSPSPSPP. 2 stretches are compositionally biased toward polar residues: residues 300–318 and 406–415; these read THPTNGSREPTQEAPNAQE and TGSNAASRSA. Basic and acidic residues predominate over residues 425–437; that stretch reads RADDIGREPDGLR.

It belongs to the MMM1 family. Homodimer. Component of the ER-mitochondria encounter structure (ERMES) or MDM complex, composed of mmm1, mdm10, mdm12 and mdm34. A mmm1 homodimer associates with one molecule of mdm12 on each side in a pairwise head-to-tail manner, and the SMP-LTD domains of mmm1 and mdm12 generate a continuous hydrophobic tunnel for phospholipid trafficking.

The protein resides in the endoplasmic reticulum membrane. In terms of biological role, component of the ERMES/MDM complex, which serves as a molecular tether to connect the endoplasmic reticulum (ER) and mitochondria. Components of this complex are involved in the control of mitochondrial shape and protein biogenesis, and function in nonvesicular lipid trafficking between the ER and mitochondria. The mdm12-mmm1 subcomplex functions in the major beta-barrel assembly pathway that is responsible for biogenesis of all outer membrane beta-barrel proteins, and acts in a late step after the SAM complex. The mdm10-mdm12-mmm1 subcomplex further acts in the TOM40-specific pathway after the action of the mdm12-mmm1 complex. Essential for establishing and maintaining the structure of mitochondria and maintenance of mtDNA nucleoids. The polypeptide is Maintenance of mitochondrial morphology protein 1 (Aspergillus oryzae (strain ATCC 42149 / RIB 40) (Yellow koji mold)).